The primary structure comprises 336 residues: 3-isopropylmalate dehydrogenase (336 aa).

Substrate is bound by residues Arg86, Arg96, Arg117, and Asp201. Mg(2+) is bound by residues Asp201, Asp225, and Asp229. Residue 258–270 participates in NAD(+) binding; the sequence is GAAFDIAGKGIAN.

This sequence belongs to the isocitrate and isopropylmalate dehydrogenases family. In terms of assembly, homotetramer. Mg(2+) serves as cofactor. It depends on Mn(2+) as a cofactor.

It localises to the cytoplasm. The enzyme catalyses (2R,3S)-3-isopropylmalate + NAD(+) = 4-methyl-2-oxopentanoate + CO2 + NADH. It functions in the pathway amino-acid biosynthesis; L-leucine biosynthesis; L-leucine from 3-methyl-2-oxobutanoate: step 3/4. In terms of biological role, catalyzes the oxidation of 3-carboxy-2-hydroxy-4-methylpentanoate (3-isopropylmalate) to 3-carboxy-4-methyl-2-oxopentanoate. The product decarboxylates to 4-methyl-2 oxopentanoate. This Saccharolobus solfataricus (strain ATCC 35092 / DSM 1617 / JCM 11322 / P2) (Sulfolobus solfataricus) protein is 3-isopropylmalate dehydrogenase (leuB).